The sequence spans 1118 residues: Receptor-type guanylate cyclase gcy-2 (1118 aa).

Residues 1–21 (MVSSILKFVILIHSTFHSTFA) form the signal peptide. At 22-494 (QNLPDTTVAP…FCPISFWEQY (473 aa)) the chain is on the extracellular side. Asn-222, Asn-351, Asn-361, Asn-387, Asn-420, and Asn-452 each carry an N-linked (GlcNAc...) asparagine glycan. The helical transmembrane segment at 495 to 515 (MILAIVSISVIVLMVIIMIIG) threads the bilayer. Over 516–1118 (CLCVISAKHA…FKMDTLKVAN (603 aa)) the chain is Cytoplasmic. The Protein kinase domain occupies 558 to 875 (LQSAPSISTG…EGFDSVTVFF (318 aa)). One can recognise a Guanylate cyclase domain in the interval 872–1002 (TVFFSDVVKF…DTVNTASRME (131 aa)). Positions 1076-1103 (WITPPAPKPEIRSVSSHGSRPPSVYDPL) are disordered.

Belongs to the adenylyl cyclase class-4/guanylyl cyclase family. Expressed bilaterally in AWA and ASI sensory neurons and in RIA and PVT interneurons.

Its subcellular location is the cell membrane. The enzyme catalyses GTP = 3',5'-cyclic GMP + diphosphate. In terms of biological role, guanylate cyclase involved in the production of the second messenger cGMP. The chain is Receptor-type guanylate cyclase gcy-2 from Caenorhabditis elegans.